Reading from the N-terminus, the 379-residue chain is Chaperone protein DnaJ 2 (379 aa).

Residues 4–68 (DYYAVLGVRR…QKKQVYDLGG (65 aa)) form the J domain. The segment at 130-212 (GTTKDIQVDT…CAGDGRVPSR (83 aa)) adopts a CR-type zinc-finger fold. Zn(2+)-binding residues include cysteine 143, cysteine 146, cysteine 160, cysteine 163, cysteine 186, cysteine 189, cysteine 200, and cysteine 203. 4 CXXCXGXG motif repeats span residues 143–150 (CNTCNGEG), 160–167 (CDMCRGRG), 186–193 (CPQCQGFA), and 200–207 (CPECAGDG). Residues 351 to 379 (RGEERPTGQFQPGQQGLFSRLKDAFNGRS) form a disordered region. Residues 358 to 367 (GQFQPGQQGL) show a composition bias toward polar residues. The segment covering 370–379 (RLKDAFNGRS) has biased composition (basic and acidic residues).

The protein belongs to the DnaJ family. As to quaternary structure, homodimer. Zn(2+) is required as a cofactor.

It is found in the cytoplasm. Its function is as follows. Participates actively in the response to hyperosmotic and heat shock by preventing the aggregation of stress-denatured proteins and by disaggregating proteins, also in an autonomous, DnaK-independent fashion. Unfolded proteins bind initially to DnaJ; upon interaction with the DnaJ-bound protein, DnaK hydrolyzes its bound ATP, resulting in the formation of a stable complex. GrpE releases ADP from DnaK; ATP binding to DnaK triggers the release of the substrate protein, thus completing the reaction cycle. Several rounds of ATP-dependent interactions between DnaJ, DnaK and GrpE are required for fully efficient folding. Also involved, together with DnaK and GrpE, in the DNA replication of plasmids through activation of initiation proteins. The sequence is that of Chaperone protein DnaJ 2 from Streptomyces albus G.